Here is a 434-residue protein sequence, read N- to C-terminus: [Pyruvate dehydrogenase (acetyl-transferring)] kinase isozyme 1, mitochondrial (434 aa).

The transit peptide at 1–26 (MRLARLLRGGTSVRPLCAVPCASRSL) directs the protein to the mitochondrion. Tyr136 bears the Phosphotyrosine; by FGFR1 mark. The Histidine kinase domain maps to 161–391 (TEYKESFGVD…DAVIYIKALS (231 aa)). At Tyr241 the chain carries Phosphotyrosine; by FGFR1, ABL1, FLT3 and JAK2. The residue at position 242 (Tyr242) is a Phosphotyrosine; by FGFR1. Residues 277–284 (ELFKNAMR), Asp316, 335–336 (ST), and 352–357 (GFGYGL) each bind ATP. Residue Thr336 is modified to Phosphothreonine. At Lys403 the chain carries N6-succinyllysine.

Belongs to the PDK/BCKDK protein kinase family. As to quaternary structure, homodimer, and heterodimer with PDK2. Interacts with the pyruvate dehydrogenase complex subunit DLAT, and is part of the multimeric pyruvate dehydrogenase complex that contains multiple copies of pyruvate dehydrogenase (E1), dihydrolipoamide acetyltransferase (DLAT, E2) and lipoamide dehydrogenase (DLD, E3). Interacts with phosphoglycerate kinase PGK1; the interaction is direct, occurs under hypoxic conditions and leads to PDK1-mediated inhibition of pyruvate dehydrogenase complex activity. In terms of processing, phosphorylated by constitutively activated ABL1, FGFR1, FLT3 and JAK2 (in vitro), and this may also occur in cancer cells that express constitutively activated ABL1, FGFR1, FLT3 and JAK2. Phosphorylation at Tyr-241 and Tyr-242 strongly increases kinase activity, while phosphorylation at Tyr-136 has a lesser effect. Phosphorylated under hypoxic conditions at Thr-336 by phosphoglycerate kinase PGK1 which has an activating effect.

The protein resides in the mitochondrion matrix. The catalysed reaction is L-seryl-[pyruvate dehydrogenase E1 alpha subunit] + ATP = O-phospho-L-seryl-[pyruvate dehydrogenase E1 alpha subunit] + ADP + H(+). Functionally, kinase that plays a key role in regulation of glucose and fatty acid metabolism and homeostasis via phosphorylation of the pyruvate dehydrogenase subunits PDHA1 and PDHA2. This inhibits pyruvate dehydrogenase activity, and thereby regulates metabolite flux through the tricarboxylic acid cycle, down-regulates aerobic respiration and inhibits the formation of acetyl-coenzyme A from pyruvate. Plays an important role in cellular responses to hypoxia and is important for cell proliferation under hypoxia. The chain is [Pyruvate dehydrogenase (acetyl-transferring)] kinase isozyme 1, mitochondrial (Pdk1) from Mus musculus (Mouse).